Here is a 466-residue protein sequence, read N- to C-terminus: Oxysterol-binding protein 4 (466 aa).

Over residues 1 to 12 (MEIGTSSTTNNI) the composition is skewed to polar residues. The disordered stretch occupies residues 1 to 67 (MEIGTSSTTN…STSPPSPPIE (67 aa)). The span at 24-45 (NNNNHNNNSSNNSSNNNSISSS) shows a compositional bias: low complexity. Polar residues predominate over residues 46–60 (PTDSSQLMNGEQSTS).

This sequence belongs to the OSBP family.

This chain is Oxysterol-binding protein 4 (osbD), found in Dictyostelium discoideum (Social amoeba).